The sequence spans 481 residues: Endonuclease Bax1 (481 aa).

An N-terminal domain (NTD) region spans residues 1-136 (MLPWELARFS…EKKIIKAPTI (136 aa)). The segment at 158 to 250 (YKLTVYVSSN…LKLANFKELK (93 aa)) is central domain (CRD). Residues 260–364 (DSSVEEKFYK…YKRKIDISLV (105 aa)) form a nuclease domain (NUS) region. 3 residues coordinate a divalent metal cation: glutamate 265, aspartate 297, and glutamate 310. The segment at 414–481 (PGYIFLKNYY…AIVIKDKKVN (68 aa)) is C-terminal domain (CTD).

This sequence belongs to the Bax1 family. As to quaternary structure, homodimer in solution, forms a heterodimer with XPB2. Requires a divalent metal cation as cofactor.

A dual DNA endonuclease probably involved in nucleotide excision repair (NER). The N-terminal nuclease domain (NTD) of the XPB2-Bax1 complex cleaves on one side of a DNA bubble (which presumably mimics DNA damage), while the NUS nuclease domain cleaves the other side, respectively called 5' and 3' nuclease activities. Interaction with XPB blocks the NTD nuclease activity. Binds to and stimulates the ATPase activity (and probably also helicase activity) of XPB2. Increases affinity of XPB2 for forked DNA. Does not stimulate the DNA-dependent activity of XPB1. In an XPB2-Bax1-bubble DNA crystal (12 bp of dsDNA, a 6 base bubble and 6 bp of dsDNA) the short 6 bp arm is unwound. The 2 helicase and the ThM domains of XPB2 with the NTD and CRD domains of Bax1 encircle the DNA, forming a tunnel where the 12 bp dsDNA and the ds-ssDNA junction are located. The ThM domain is wedged between the ssDNA tails, with the 5' ssDNA contacting Bax1 and the 3' ssDNA in a channel in XPB2. The nuclease domain (NUS) of Bax1 does not contact DNA in the bubble DNA complex. This chain is Endonuclease Bax1, found in Sulfurisphaera tokodaii (strain DSM 16993 / JCM 10545 / NBRC 100140 / 7) (Sulfolobus tokodaii).